Here is a 126-residue protein sequence, read N- to C-terminus: Large ribosomal subunit protein bL12 (126 aa).

Belongs to the bacterial ribosomal protein bL12 family. In terms of assembly, homodimer. Part of the ribosomal stalk of the 50S ribosomal subunit. Forms a multimeric L10(L12)X complex, where L10 forms an elongated spine to which 2 to 4 L12 dimers bind in a sequential fashion. Binds GTP-bound translation factors.

Its function is as follows. Forms part of the ribosomal stalk which helps the ribosome interact with GTP-bound translation factors. Is thus essential for accurate translation. This Bordetella petrii (strain ATCC BAA-461 / DSM 12804 / CCUG 43448) protein is Large ribosomal subunit protein bL12.